The following is a 142-amino-acid chain: MFQGASALSLDAKGRMSIPSRHREALQQQAEGRVTLTKHPDGCLLLFPRPEWESFRQRIAALPMDAHWWKRIFLGNAADVEMDGAGRVLIAPELRGAAMLDKEVMLLGMGSHFEVWDAATYAAKEQQAMAQGMPEALKNFSF.

SpoVT-AbrB domains follow at residues 5–51 (ASAL…PRPE) and 77–120 (AADV…DAAT).

Belongs to the MraZ family. In terms of assembly, forms oligomers.

It localises to the cytoplasm. The protein resides in the nucleoid. This chain is Transcriptional regulator MraZ, found in Cupriavidus pinatubonensis (strain JMP 134 / LMG 1197) (Cupriavidus necator (strain JMP 134)).